Reading from the N-terminus, the 441-residue chain is 3-phosphoshikimate 1-carboxyvinyltransferase (441 aa).

Over residues 1 to 10 (MSVTSTASSS) the composition is skewed to polar residues. Residues 1 to 21 (MSVTSTASSSRELRAGGGLSG) are disordered. Lysine 29, serine 30, and arginine 34 together coordinate 3-phosphoshikimate. Phosphoenolpyruvate is bound at residue lysine 29. The phosphoenolpyruvate site is built by glycine 103 and arginine 132. 3-phosphoshikimate-binding residues include serine 177, glutamine 179, aspartate 328, and lysine 355. A phosphoenolpyruvate-binding site is contributed by glutamine 179. Residue aspartate 328 is the Proton acceptor of the active site. Phosphoenolpyruvate contacts are provided by arginine 359 and arginine 401.

Belongs to the EPSP synthase family. As to quaternary structure, monomer.

Its subcellular location is the cytoplasm. It carries out the reaction 3-phosphoshikimate + phosphoenolpyruvate = 5-O-(1-carboxyvinyl)-3-phosphoshikimate + phosphate. It functions in the pathway metabolic intermediate biosynthesis; chorismate biosynthesis; chorismate from D-erythrose 4-phosphate and phosphoenolpyruvate: step 6/7. Catalyzes the transfer of the enolpyruvyl moiety of phosphoenolpyruvate (PEP) to the 5-hydroxyl of shikimate-3-phosphate (S3P) to produce enolpyruvyl shikimate-3-phosphate and inorganic phosphate. The chain is 3-phosphoshikimate 1-carboxyvinyltransferase from Prochlorococcus marinus (strain MIT 9303).